The chain runs to 677 residues: MTASPDYLVVLFGITAGATGAKLGSDEKELILLLWKVVDLANKKVGQLHEVLVRPDQLELTEDCKEETKIDAENLSSAPQLDQALRQFNQSVSNELNIGVGTSFCLCTDGQLHVRQILHPEASKKNVLLPECFYSFFDLRKEFKKCCPGSPDLDKLDVAAMAESLNFEKNDSMSRYGASQVEDMGNIILAMISEPYNHRFSDPERVNYKFESGTCSKTELIDGNTVVRARGLPWQSSDQDIARFFKGLNIAKGGAALCLNAQGRRNGEALVRFVSEEHRDLALQRHKHHMGTRYIEVYKATGEDFLKIAGGTSNEVAQFLSKENQVIVRMRGLPFTATAEEVVAFFGQHCPITGGKEGILFVTYPDGRPTGDAFVLFACEEYAQNALRKHKDLLGKRYIELFRSTAAEVQQVLNRFSSAPLIPLPTAPIIPVLPQQFVPPTNVRDCVRLRGLPYAATIEDILDFLGEFSTDIRTHGVHMVLNHQGRPSGDAFIQMKSTDRAFMAAQKYHKKTMKDRYVEVFQCSAEEMNFVLMGGTLNRNGLSPPPCLSPPSYTFPAPAAVIPTEAAIYQPSLLLNPRALQPSTAYYPAGTQLFMNYTAYYPSPPGSPNSLGYFPTAANLSSVPPQPGTVVRMQGLAYNTGVKEILNFFQGYQYATEDGLVHANDQARTVPKEWVCI.

RRM domains follow at residues 225–302 (TVVR…KATG), 326–406 (VIVR…RSTA), and 445–525 (DCVR…QCSA). Residue S543 is modified to Phosphoserine. Position 578 is an omega-N-methylarginine (R578).

The protein belongs to the ESRP family.

It is found in the nucleus. Its function is as follows. mRNA splicing factor that regulates the formation of epithelial cell-specific isoforms. Specifically regulates the expression of FGFR2-IIIb, an epithelial cell-specific isoform of FGFR2. Also regulates the splicing of CD44, CTNND1, ENAH, 3 transcripts that undergo changes in splicing during the epithelial-to-mesenchymal transition (EMT). Acts by directly binding specific sequences in mRNAs. Binds the GU-rich sequence motifs in the ISE/ISS-3, a cis-element regulatory region present in the mRNA of FGFR2. Regulates splicing and expression of genes involved in inner ear development, auditory hair cell differentiation, and cell fate specification in the cochlear epithelium. In Rattus norvegicus (Rat), this protein is Epithelial splicing regulatory protein 1 (Esrp1).